The sequence spans 520 residues: MENIEKLIMQEKILMLELDLVRAKISLARANGSSQQGDLPLHRETPVKEEAVHSALATFTPTQVKAIPEQTAPGKESTNPLMASILPKDMNPVQTGIRLAVPGDFLRPHQGIPIPQKTDLSSTVAPLRAESGIQHPHINYYVVYNGPHAGIYDDWGCTKAATNGAPGVAHKKFATITEARAAADAYTTSQQTDRLNFIPKGEAQLKPKSFAKALTSPPKQKAHWLTLGTKRPSGDPAPKEISFAPEITMDDFLYLYDLGRKFDGEGDDTMFTTDNEKISLFNFRKNADPQMVREAYAAGLIKTIYPSNNLQEIKYLPKKVKDAVKRFRTNCIKNTEKDIFLKIRSTIPVWTIQGLLHKPRQVIEIGVSKKVVPTESKAMESKIQIEDLTELAVKTGEQSIQSLLRLNDKKKIFVNMVEHDTLVYSKNIKDTVSEDQRAMETFQQRVISGNLLGFHCPAICHFIERTVEKEGGSYKCHHCDKGKAIVQNASADSGPKDGPPPTRSIVEKEDVPTTSSKQVD.

Residues 487 to 520 form a disordered region; sequence QNASADSGPKDGPPPTRSIVEKEDVPTTSSKQVD.

The protein belongs to the caulimoviridae viroplasmin family.

The protein localises to the host cytoplasm. Its function is as follows. Enhances the ribosomal termination-reinitiation event leading to the translation of major open reading frames on the polycistronic viral RNAs. The protein is Transactivator/viroplasmin protein of Arabidopsis thaliana (Mouse-ear cress).